The following is a 508-amino-acid chain: Splicing regulatory glutamine/lysine-rich protein 1 (508 aa).

The region spanning 66–142 (RTVYVGNLNS…RPLKINHSNN (77 aa)) is the RRM domain. S171 and S184 each carry phosphoserine. Residues 173-508 (ISAAIEPESG…ENLSTKTEAV (336 aa)) are disordered. A compositionally biased stretch (basic and acidic residues) spans 180–189 (ESGKSNERKG). Basic residues predominate over residues 190 to 259 (GRSRSHTRSK…KSRSRSHSRD (70 aa)). Basic and acidic residues predominate over residues 260-355 (KRKDTREKIK…DRSKEIDEKR (96 aa)). The residue at position 363 (T363) is a Phosphothreonine. Basic residues predominate over residues 372–388 (RRSRSSSRERRRRRSRS). Positions 419 to 488 (REKERDHISE…DAPRTEENKI (70 aa)) are enriched in basic and acidic residues. Polar residues predominate over residues 489-508 (QHNGNCQLNEENLSTKTEAV). K504 participates in a covalent cross-link: Glycyl lysine isopeptide (Lys-Gly) (interchain with G-Cter in SUMO2).

The protein belongs to the splicing factor SR family. In terms of assembly, homodimer. Binds SFRS1, SFRS2, SFRS3 and SFRS6. Interacts with the spliceosome. Interacts with SREK1IP1.

It is found in the nucleus. Functionally, participates in the regulation of alternative splicing by modulating the activity of other splice facors. Inhibits the splicing activity of SFRS1, SFRS2 and SFRS6. Augments the splicing activity of SFRS3. The sequence is that of Splicing regulatory glutamine/lysine-rich protein 1 (SREK1) from Homo sapiens (Human).